Consider the following 144-residue polypeptide: Transcription antitermination protein NusB (144 aa).

This sequence belongs to the NusB family.

Involved in transcription antitermination. Required for transcription of ribosomal RNA (rRNA) genes. Binds specifically to the boxA antiterminator sequence of the ribosomal RNA (rrn) operons. The sequence is that of Transcription antitermination protein NusB from Haemophilus influenzae (strain 86-028NP).